Reading from the N-terminus, the 84-residue chain is Large ribosomal subunit protein bL27 (84 aa).

The disordered stretch occupies residues Met-1–Lys-24. The segment covering Ser-9–Arg-20 has biased composition (polar residues).

It belongs to the bacterial ribosomal protein bL27 family.

This Nocardioides sp. (strain ATCC BAA-499 / JS614) protein is Large ribosomal subunit protein bL27.